A 353-amino-acid polypeptide reads, in one-letter code: UPF0283 membrane protein YcjF (353 aa).

Helical transmembrane passes span 70-90, 100-120, and 213-233; these read MVMGGLALFGASVVGQGVQWT, VALGGCAAGALIIGAGVGSVV, and ESTLMIAVSPLALVDMAFIAW.

Belongs to the UPF0283 family.

The protein localises to the cell inner membrane. The chain is UPF0283 membrane protein YcjF from Shigella sonnei (strain Ss046).